The chain runs to 163 residues: Urease accessory protein UreE (163 aa).

Residues glutamine 144–histidine 163 are disordered.

Belongs to the UreE family.

It localises to the cytoplasm. In terms of biological role, involved in urease metallocenter assembly. Binds nickel. Probably functions as a nickel donor during metallocenter assembly. The protein is Urease accessory protein UreE of Aliivibrio fischeri (strain MJ11) (Vibrio fischeri).